Here is a 129-residue protein sequence, read N- to C-terminus: Small ribosomal subunit protein uS11 (129 aa).

The protein belongs to the universal ribosomal protein uS11 family. In terms of assembly, part of the 30S ribosomal subunit. Interacts with proteins S7 and S18. Binds to IF-3.

Located on the platform of the 30S subunit, it bridges several disparate RNA helices of the 16S rRNA. Forms part of the Shine-Dalgarno cleft in the 70S ribosome. The chain is Small ribosomal subunit protein uS11 from Bacillus cereus (strain ATCC 14579 / DSM 31 / CCUG 7414 / JCM 2152 / NBRC 15305 / NCIMB 9373 / NCTC 2599 / NRRL B-3711).